The chain runs to 137 residues: Large ribosomal subunit protein uL16 (137 aa).

Residues 1–17 (MLQPKRTKFRKQQKGRN) show a composition bias toward basic residues. Residues 1–24 (MLQPKRTKFRKQQKGRNRGLAQSG) form a disordered region.

The protein belongs to the universal ribosomal protein uL16 family. As to quaternary structure, part of the 50S ribosomal subunit.

Its function is as follows. Binds 23S rRNA and is also seen to make contacts with the A and possibly P site tRNAs. In Dichelobacter nodosus (strain VCS1703A), this protein is Large ribosomal subunit protein uL16.